A 545-amino-acid polypeptide reads, in one-letter code: Oligopeptide-binding protein OppA (545 aa).

The signal sequence occupies residues 1–20 (MKKRWSIVTLMLIFTLVLSA). C21 carries the N-palmitoyl cysteine lipid modification. Residue C21 is the site of S-diacylglycerol cysteine attachment. T470 bears the Phosphothreonine mark.

It belongs to the bacterial solute-binding protein 5 family. The complex is composed of two ATP-binding proteins (OppD and OppF), two transmembrane proteins (OppB and OppC) and a solute-binding protein (OppA). OppA interacts with FloT in detergent-resistant membranes (DRM). Colocalizes rarely with FloT membrane assemblies.

The protein localises to the cell membrane. The protein resides in the membrane raft. In terms of biological role, part of the ABC transporter complex OppABCDF involved in the uptake of oligopeptides. Plays an important nutritional role. Binds peptides containing up to five amino acids residues regardless of their sequence, with highest affinity for tetra- and pentapeptides. Binds to the sporulation-promoting peptide PhrE (Ser-Arg-Asn-Val-Thr). Required for sporulation and genetic competence. The sequence is that of Oligopeptide-binding protein OppA from Bacillus subtilis (strain 168).